We begin with the raw amino-acid sequence, 104 residues long: Circadian clock oscillator protein KaiB (104 aa).

This sequence belongs to the KaiB family. As to quaternary structure, the KaiABC complex composition changes during the circadian cycle to control KaiC phosphorylation. Complexes KaiC(6), KaiA(2-4):KaiC(6), KaiB(6):KaiC(6) and KaiC(6):KaiB(6):KaiA(12) are among the most important forms, many form cooperatively. Undergoes a major conformational rearrangment; in the free state forms homotetramers as a dimer of dimers. When bound to the CI domain of KaiC switches to a monomeric thioredoxin-fold (KaiB(fs)). KaiB(fs) binds CikA, leading it to dephosphorylate phospho-RpaA.

Key component of the KaiABC oscillator complex, which constitutes the main circadian regulator in cyanobacteria. Complex composition changes during the circadian cycle to control KaiC phosphorylation. KaiA stimulates KaiC autophosphorylation, while KaiB sequesters KaiA, leading to KaiC autodephosphorylation. Phospho-Ser-431 KaiC accumulation triggers binding of KaiB to form the KaiB(6):KaiC(6) complex, leading to changes in output regulators CikA and SasA. KaiB switches to a thioredoxin-like fold (KaiB(fs)) when bound to KaiC. KaiB(6):KaiC(6) formation exposes a site for KaiA binding that sequesters KaiA from KaiC, making the KaiC(6):KaiB(6):KaiA(12) complex that results in KaiC autodephosphorylation. Functionally, a metamorphic protein which reversibly switches between an inactive tetrameric fold and a rare, thioredoxin-like monomeric fold (KaiB(fs)). KaiB(fs) binds phospho-KaiC, KaiA and CikA. KaiA and CikA compete for binding to KaiB(fs), and KaiB(fs) and SasA compete for binding to KaiC, thus the clock oscillator and output signal pathway are tightly coupled. This chain is Circadian clock oscillator protein KaiB, found in Trichodesmium erythraeum (strain IMS101).